A 236-amino-acid polypeptide reads, in one-letter code: Leucyl/phenylalanyl-tRNA--protein transferase (236 aa).

Belongs to the L/F-transferase family.

Its subcellular location is the cytoplasm. The enzyme catalyses N-terminal L-lysyl-[protein] + L-leucyl-tRNA(Leu) = N-terminal L-leucyl-L-lysyl-[protein] + tRNA(Leu) + H(+). It carries out the reaction N-terminal L-arginyl-[protein] + L-leucyl-tRNA(Leu) = N-terminal L-leucyl-L-arginyl-[protein] + tRNA(Leu) + H(+). The catalysed reaction is L-phenylalanyl-tRNA(Phe) + an N-terminal L-alpha-aminoacyl-[protein] = an N-terminal L-phenylalanyl-L-alpha-aminoacyl-[protein] + tRNA(Phe). In terms of biological role, functions in the N-end rule pathway of protein degradation where it conjugates Leu, Phe and, less efficiently, Met from aminoacyl-tRNAs to the N-termini of proteins containing an N-terminal arginine or lysine. The chain is Leucyl/phenylalanyl-tRNA--protein transferase from Vibrio campbellii (strain ATCC BAA-1116).